A 433-amino-acid chain; its full sequence is Trigger factor (433 aa).

A PPIase FKBP-type domain is found at 161 to 246; that stretch reads NDRVIIDFVG…LNKVENMILP (86 aa).

This sequence belongs to the FKBP-type PPIase family. Tig subfamily.

It is found in the cytoplasm. It carries out the reaction [protein]-peptidylproline (omega=180) = [protein]-peptidylproline (omega=0). Involved in protein export. Acts as a chaperone by maintaining the newly synthesized protein in an open conformation. Functions as a peptidyl-prolyl cis-trans isomerase. The protein is Trigger factor of Haemophilus ducreyi (strain 35000HP / ATCC 700724).